We begin with the raw amino-acid sequence, 480 residues long: UDP-N-acetylmuramate--L-alanine ligase (480 aa).

129 to 135 (GSHGKTT) serves as a coordination point for ATP.

The protein belongs to the MurCDEF family.

The protein resides in the cytoplasm. The enzyme catalyses UDP-N-acetyl-alpha-D-muramate + L-alanine + ATP = UDP-N-acetyl-alpha-D-muramoyl-L-alanine + ADP + phosphate + H(+). It participates in cell wall biogenesis; peptidoglycan biosynthesis. Functionally, cell wall formation. The chain is UDP-N-acetylmuramate--L-alanine ligase from Syntrophus aciditrophicus (strain SB).